The following is a 592-amino-acid chain: Salivary peroxidase/catechol oxidase (592 aa).

Positions 1-21 (MWMFLKLLLFVCSSWWSCAQA) are cleaved as a signal peptide. A disulfide bridge links Cys-24 with Cys-37. An N-linked (GlcNAc...) asparagine glycan is attached at Asn-25. The active-site Proton acceptor is His-110. 5 residues coordinate Ca(2+): Asp-111, Thr-187, Phe-189, Asp-191, and Ser-193. An N-linked (GlcNAc...) asparagine glycan is attached at Asn-230. A disulfide bridge connects residues Cys-235 and Cys-244. Residue His-353 coordinates heme b. A glycan (N-linked (GlcNAc...) asparagine) is linked at Asn-366. Disulfide bonds link Cys-452-Cys-509 and Cys-553-Cys-580.

This sequence belongs to the peroxidase family. XPO subfamily. As to expression, female salivary gland.

It is found in the secreted. It catalyses the reaction 2 catechol + O2 = 2 1,2-benzoquinone + 2 H2O. Functionally, inhibits noradrenaline-induced smooth muscle contraction in the host, probably due to the oxidation of noradrenaline, resulting in vasodilation. Exhibits peroxidase activity. The chain is Salivary peroxidase/catechol oxidase from Anopheles albimanus (New world malaria mosquito).